The following is a 587-amino-acid chain: Zinc finger protein 69 (587 aa).

The tract at residues Asn42–Gln128 is disordered. The 72-residue stretch at His76–Gln147 folds into the KRAB domain. 9 consecutive C2H2-type zinc fingers follow at residues His271 to Gln293, Lys299 to Ala321, Asn327 to Glu349, Lys355 to Glu377, Glu383 to Glu405, Asp411 to Glu433, Ser439 to Glu461, Thr467 to Glu489, and Lys495 to Val517. Residues Ser564–Leu587 are disordered. Residues Thr574 to Leu587 are compositionally biased toward basic and acidic residues.

This sequence belongs to the krueppel C2H2-type zinc-finger protein family.

It localises to the nucleus. In terms of biological role, putative transcription factor that appears to regulate lipid metabolism. The protein is Zinc finger protein 69 of Mus musculus (Mouse).